A 156-amino-acid chain; its full sequence is Small ribosomal subunit protein uS7 (156 aa).

The protein belongs to the universal ribosomal protein uS7 family. In terms of assembly, part of the 30S ribosomal subunit. Contacts proteins S9 and S11.

In terms of biological role, one of the primary rRNA binding proteins, it binds directly to 16S rRNA where it nucleates assembly of the head domain of the 30S subunit. Is located at the subunit interface close to the decoding center, probably blocks exit of the E-site tRNA. The polypeptide is Small ribosomal subunit protein uS7 (Maridesulfovibrio salexigens (strain ATCC 14822 / DSM 2638 / NCIMB 8403 / VKM B-1763) (Desulfovibrio salexigens)).